A 147-amino-acid chain; its full sequence is Small ribosomal subunit protein uS12 (147 aa).

It belongs to the universal ribosomal protein uS12 family. Part of the 30S ribosomal subunit.

Functionally, with S4 and S5 plays an important role in translational accuracy. Located at the interface of the 30S and 50S subunits. This Pyrobaculum arsenaticum (strain DSM 13514 / JCM 11321 / PZ6) protein is Small ribosomal subunit protein uS12.